A 68-amino-acid polypeptide reads, in one-letter code: ATP synthase F(0) complex subunit 8 (68 aa).

Residues 8–24 (VWPTMIAPMLLTLFLIT) form a helical membrane-spanning segment. N6-acetyllysine; alternate is present on Lys-54. Lys-54 is modified (N6-succinyllysine; alternate). Position 57 is an N6-acetyllysine (Lys-57).

It belongs to the ATPase protein 8 family. In terms of assembly, component of the ATP synthase complex composed at least of ATP5F1A/subunit alpha, ATP5F1B/subunit beta, ATP5MC1/subunit c (homooctomer), MT-ATP6/subunit a, MT-ATP8/subunit 8, ATP5ME/subunit e, ATP5MF/subunit f, ATP5MG/subunit g, ATP5MK/subunit k, ATP5MJ/subunit j, ATP5F1C/subunit gamma, ATP5F1D/subunit delta, ATP5F1E/subunit epsilon, ATP5PF/subunit F6, ATP5PB/subunit b, ATP5PD/subunit d, ATP5PO/subunit OSCP. ATP synthase complex consists of a soluble F(1) head domain (subunits alpha(3) and beta(3)) - the catalytic core - and a membrane F(0) domain - the membrane proton channel (subunits c, a, 8, e, f, g, k and j). These two domains are linked by a central stalk (subunits gamma, delta, and epsilon) rotating inside the F1 region and a stationary peripheral stalk (subunits F6, b, d, and OSCP). Interacts with PRICKLE3.

It localises to the mitochondrion membrane. Functionally, subunit 8, of the mitochondrial membrane ATP synthase complex (F(1)F(0) ATP synthase or Complex V) that produces ATP from ADP in the presence of a proton gradient across the membrane which is generated by electron transport complexes of the respiratory chain. ATP synthase complex consist of a soluble F(1) head domain - the catalytic core - and a membrane F(1) domain - the membrane proton channel. These two domains are linked by a central stalk rotating inside the F(1) region and a stationary peripheral stalk. During catalysis, ATP synthesis in the catalytic domain of F(1) is coupled via a rotary mechanism of the central stalk subunits to proton translocation. In vivo, can only synthesize ATP although its ATP hydrolase activity can be activated artificially in vitro. Part of the complex F(0) domain. This Gorilla gorilla gorilla (Western lowland gorilla) protein is ATP synthase F(0) complex subunit 8.